The chain runs to 98 residues: DNA-binding protein Fis (98 aa).

A DNA-binding region (H-T-H motif) is located at residues 74-93 (QTRAALMLGINRSTLRKKLK).

Belongs to the transcriptional regulatory Fis family. In terms of assembly, homodimer.

Its function is as follows. Activates ribosomal RNA transcription. Plays a direct role in upstream activation of rRNA promoters. This Buchnera aphidicola subsp. Acyrthosiphon pisum (strain 5A) protein is DNA-binding protein Fis.